The primary structure comprises 120 residues: UPF0231 protein YacL (120 aa).

This sequence belongs to the UPF0231 family.

The chain is UPF0231 protein YacL from Salmonella paratyphi A (strain ATCC 9150 / SARB42).